The primary structure comprises 455 residues: Golgi pH regulator (455 aa).

A run of 5 helical transmembrane segments spans residues 5–25, 46–66, 79–99, 114–134, and 150–170; these read IDSS…WLFF, VTFA…LGVL, LCVI…YFIV, CLLW…FPIL, and VGVI…VNCP. N-linked (GlcNAc...) asparagine glycans are attached at residues N180 and N243. Transmembrane regions (helical) follow at residues 290–310, 343–363, 378–398, and 425–445; these read GYFF…NIVF, ISFI…LITL, VIVL…VLLI, and WFDV…YLAH.

The protein belongs to the Golgi pH regulator (TC 1.A.38) family. In terms of assembly, homotrimer. Interacts with RABL3; the interaction stabilizes GPR89A.

The protein localises to the golgi apparatus membrane. It carries out the reaction iodide(out) = iodide(in). It catalyses the reaction chloride(in) = chloride(out). The catalysed reaction is bromide(in) = bromide(out). The enzyme catalyses fluoride(in) = fluoride(out). In terms of biological role, voltage-gated channel that enables the transfer of monoatomic anions such as iodide, chloride, bromide and fluoride which may function in counter-ion conductance and participates in Golgi acidification. Plays a role in lymphocyte development, probably by acting as a RABL3 effector in hematopoietic cells. This is Golgi pH regulator from Bos taurus (Bovine).